Here is a 587-residue protein sequence, read N- to C-terminus: F-box/WD repeat-containing protein sel-10 (587 aa).

Over residues 1-11 the composition is skewed to basic and acidic residues; the sequence is MWPRNDVHMDD. A disordered region spans residues 1–53; the sequence is MWPRNDVHMDDGSMTPEDQEPVTDNDMEYNDNGEESSYSNGSSSSYNADKLSS. Residues 17 to 34 are compositionally biased toward acidic residues; the sequence is EDQEPVTDNDMEYNDNGE. The segment covering 35 to 47 has biased composition (low complexity); that stretch reads ESSYSNGSSSSYN. The region spanning 121 to 167 is the F-box domain; the sequence is RDFLSCLPVELGMKILHNLTGYDLLKVAQVSKNWKLISEIDKIWKSL. WD repeat units follow at residues 253-291, 294-333, 336-373, 376-415, 416-455, 461-498, and 501-539; these read GHEDHVITCMQIHDDVLVTGSDDNTLKVWCIDKGEVMYT, GHTGGVWTSQISQCGRYIVSGSTDRTVKVWSTVDGSLLHT, GHTSTVRCMAMAGSILVTGSRDTTLRVWDVESGRHLAT, GHHAAVRCVQFDGTTVVSGGYDFTVKIWNAHTGRCIRTLT, GHNNRVYSLLFESERSIVCSGSLDTSIRVWDFTRPEGQEC, GHTSLTSGMQLRGNILVSCNADSHVRVWDIHEGTCVHM, and GHRSAITSLQWFGRNMVATSSDDGTVKLWDIERGALIRD.

As to quaternary structure, probable component of the SCF(sel-10) E3 ubiquitin-protein ligase complex which includes skr-1 and F-box domain-containing protein sel-10 as a substrate recognition component. Interacts with fem-1, fem-2, and fem-3. Interacts with the intracellular domain of glp-1 and sel-12. Interacts with lin-12. Interacts with skr-1. Interacts with zyg-1. In terms of tissue distribution, expressed in tail and head neurons.

It is found in the cell projection. The protein localises to the axon. Its subcellular location is the cytoplasm. Probable substrate recognition component of SCF (SKP1-CUL-F-box protein) E3 ubiquitin-protein ligase complex, which mediates the ubiquitination and subsequent proteasomal degradation of target proteins. Regulates synapse elimination in early development in the motor neuron HSNL. Cell autonomous negative regulator of lin-12/Notch-mediated signaling, with respect to lin-12 activity in cell fate decisions and tumorigenesis. May target the intracellular domains of lin-12/Notch proteins for ubiquitin-dependent degradation. Involved in sex determination by promoting female development. Potential regulator of presenilin. May have a role in egg laying. Regulates zyg-1 levels (possibly redundantly with lin-23) to control centrosome duplication during mitosis. Negatively regulates lin-45 activity and protein stability, probably by targeting it for ubiquitination and proteasomal degradation. In Caenorhabditis elegans, this protein is F-box/WD repeat-containing protein sel-10.